The chain runs to 743 residues: MGDSGSRRSTLVSRLPIFRRSISRKHDSLPSSPSSSNTVGVHSSSPSSTNSSSGSTGKRRSLFRTPSISFHHKKGSEPKQEPTNQNLSISNGAQPGQSSMQKLSLEEHTKARGRHSVGFSSSRNKKITRSLTEDFEREKEHSTNKNVFINCLSSGKSEGDDSGFTEEQTRRSVKQSTKKLLTKSFSSHYKLSKPVPQSQSISLVQQSEFSLEITQYQEREPVLVRGSPSCSVDVTERAGSSLQSPLLSADLTTAQTPSEFLALTEDSVSETDAFPKSGSMASHCDNLGHNDSTSQISPNPAAVTKTTRDLRGTVPCAIVSPGKYRLEGRCSTESNSLPETSAAYQKEVLLQITKLPVMNGSDSETHPSTDTREDHIVIQNGETMLATSSPRKFGFYEHHKAIAERVKGIHPISDSRIIPSSGDHHVLNKTSYGYDANPAKVLASSLSPYREGRFIERRLRSSSEGTAGSSRMILKPKDGNVEEVNSLRKQRASSSSSKMNSMDVLNNLGSCELDEDDLMLDLEFLEEQNLHPSVCREDSYHSVVSCAAVVLTPMEPTVEMKKREELKFREPSKQNLSLKLAKDIDQEARCSHIRGVPSSPSSDWPLPSVEENGGIDSLPFRLMLQDCTAVKTLLLKMKRVLQESADMSPASSTTSLPVSPLAEEPLPFKDIMKDECSMLKLQLKEKDELISQLQEELEKVQHLQKAFASRVDKSTQTELLGYDALWNPTCTEGLFKPVHNIST.

Disordered stretches follow at residues 1-125 (MGDS…SRNK) and 156-175 (KSEGDDSGFTEEQTRRSVKQ). Residues 29 to 56 (LPSSPSSSNTVGVHSSSPSSTNSSSGST) show a composition bias toward low complexity. Over residues 81-102 (EPTNQNLSISNGAQPGQSSMQK) the composition is skewed to polar residues. Residues 672-713 (MKDECSMLKLQLKEKDELISQLQEELEKVQHLQKAFASRVDK) adopt a coiled-coil conformation.

The protein belongs to the CCSER family.

The chain is Serine-rich coiled-coil domain-containing protein 1 (CCSER1) from Bos taurus (Bovine).